The following is a 104-amino-acid chain: Translation initiation factor 1A (104 aa).

A compositionally biased stretch (low complexity) spans 1–14 (MRGQQTPPQQPTRV). A disordered region spans residues 1–20 (MRGQQTPPQQPTRVRTPREN). The 76-residue stretch at 12–87 (TRVRTPRENE…EKCDVIWRYT (76 aa)) folds into the S1-like domain.

The protein belongs to the eIF-1A family.

Its function is as follows. Seems to be required for maximal rate of protein biosynthesis. Enhances ribosome dissociation into subunits and stabilizes the binding of the initiator Met-tRNA(I) to 40 S ribosomal subunits. The sequence is that of Translation initiation factor 1A from Methanococcus maripaludis (strain DSM 14266 / JCM 13030 / NBRC 101832 / S2 / LL).